The following is a 392-amino-acid chain: Ameloblastin (392 aa).

The first 26 residues, 1–26 (MPALKIPLFKMKDMILILCLLKMSSA), serve as a signal peptide directing secretion. Proline 37 carries the hydroxyproline modification. Serine 43 is modified (phosphoserine). 3 disordered regions span residues 86 to 109 (FPWMRPREHETQQPSLQPQQPGQK), 247 to 280 (TLEFDSPVAATKGPEKGEGGAQDSPVPEAHLADP), and 349 to 392 (TTLG…FQEP). The span at 97-109 (QQPSLQPQQPGQK) shows a compositional bias: low complexity. A compositionally biased stretch (polar residues) spans 359–381 (VDSTATPDTQHTLMPRNKAQQPQ). The span at 382 to 392 (IKHDAWHFQEP) shows a compositional bias: basic and acidic residues.

Belongs to the ameloblastin family.

The protein resides in the secreted. Its subcellular location is the extracellular space. The protein localises to the extracellular matrix. Involved in the mineralization and structural organization of enamel. This chain is Ameloblastin (AMBN), found in Bos taurus (Bovine).